The sequence spans 223 residues: UPF0441 protein YgiB (223 aa).

The segment covering 178–195 has biased composition (low complexity); that stretch reads TVPKTAMAPKPATTTTVT. The interval 178-223 is disordered; the sequence is TVPKTAMAPKPATTTTVTRGGFGESVAKQSTMQRSAAGTSTRSMGG. The span at 204–223 shows a compositional bias: polar residues; that stretch reads AKQSTMQRSAAGTSTRSMGG.

The protein belongs to the UPF0441 family.

This chain is UPF0441 protein YgiB, found in Salmonella enteritidis PT4 (strain P125109).